A 228-amino-acid polypeptide reads, in one-letter code: Leucyl/phenylalanyl-tRNA--protein transferase (228 aa).

It belongs to the L/F-transferase family.

The protein resides in the cytoplasm. It carries out the reaction N-terminal L-lysyl-[protein] + L-leucyl-tRNA(Leu) = N-terminal L-leucyl-L-lysyl-[protein] + tRNA(Leu) + H(+). It catalyses the reaction N-terminal L-arginyl-[protein] + L-leucyl-tRNA(Leu) = N-terminal L-leucyl-L-arginyl-[protein] + tRNA(Leu) + H(+). The catalysed reaction is L-phenylalanyl-tRNA(Phe) + an N-terminal L-alpha-aminoacyl-[protein] = an N-terminal L-phenylalanyl-L-alpha-aminoacyl-[protein] + tRNA(Phe). Functions in the N-end rule pathway of protein degradation where it conjugates Leu, Phe and, less efficiently, Met from aminoacyl-tRNAs to the N-termini of proteins containing an N-terminal arginine or lysine. The sequence is that of Leucyl/phenylalanyl-tRNA--protein transferase from Sulfurimonas denitrificans (strain ATCC 33889 / DSM 1251) (Thiomicrospira denitrificans (strain ATCC 33889 / DSM 1251)).